The sequence spans 165 residues: Polcalcin Cup a 4 (165 aa).

EF-hand domains lie at glutamine 22–glutamate 57, valine 58–leucine 86, alanine 91–proline 126, and cysteine 127–aspartate 162. Aspartate 35, asparagine 37, aspartate 39, lysine 41, glutamate 46, aspartate 71, aspartate 73, aspartate 75, tyrosine 77, glutamate 82, aspartate 104, aspartate 106, asparagine 108, threonine 110, glutamate 115, aspartate 140, asparagine 142, aspartate 144, and glutamate 151 together coordinate Ca(2+).

In terms of assembly, may exist as monomer and dimer. In terms of tissue distribution, expressed in mature pollen grains.

This Hesperocyparis arizonica (Arizona cypress) protein is Polcalcin Cup a 4.